The primary structure comprises 421 residues: Aspartokinase (421 aa).

K7–G10 is a binding site for ATP. Residue R25–K30 participates in substrate binding. S41 serves as a coordination point for ATP. Residues D45–D49, E74, L125–D126, R151–S154, and S154 contribute to the substrate site. Residues T174 to D175, F180 to R185, and K210 contribute to the ATP site. 2 consecutive ACT domains span residues V267–S348 and L349–R421. Residues D274, D274–A279, N292–D294, Q298, V360–T361, N374–I375, and S381–E382 contribute to the substrate site.

This sequence belongs to the aspartokinase family. As to quaternary structure, heterotetramer consisting of 2 isoforms Alpha (catalytic and regulation) and of a homodimer of 2 isoforms Beta (regulation).

It catalyses the reaction L-aspartate + ATP = 4-phospho-L-aspartate + ADP. The protein operates within amino-acid biosynthesis; L-lysine biosynthesis via DAP pathway; (S)-tetrahydrodipicolinate from L-aspartate: step 1/4. Its pathway is amino-acid biosynthesis; L-methionine biosynthesis via de novo pathway; L-homoserine from L-aspartate: step 1/3. It participates in amino-acid biosynthesis; L-threonine biosynthesis; L-threonine from L-aspartate: step 1/5. With respect to regulation, feedback inhibition by lysine and threonine. Functionally, catalyzes the phosphorylation of the beta-carboxyl group of aspartic acid with ATP to yield 4-phospho-L-aspartate, which is involved in the branched biosynthetic pathway leading to the biosynthesis of amino acids lysine, threonine, isoleucine and methionine. The polypeptide is Aspartokinase (ask) (Mycolicibacterium smegmatis (Mycobacterium smegmatis)).